We begin with the raw amino-acid sequence, 37 residues long: Esculentin-2L (37 aa).

Cysteines 31 and 37 form a disulfide.

Expressed by the skin glands.

It localises to the secreted. Its function is as follows. Antibacterial activity against Gram-positive bacterium S.aureus and Gram-negative bacterium E.coli. Has activity against C.albicans. This chain is Esculentin-2L, found in Rana luteiventris (Columbia spotted frog).